The sequence spans 132 residues: Vesicle transport protein GOT1A (132 aa).

Topologically, residues 1–16 are cytoplasmic; it reads MISITEWQKIGVGTTG. Residues 17-37 traverse the membrane as a helical segment; sequence FGIFFILFGMLLYFDSVLLAF. At 38–39 the chain is on the lumenal side; it reads GN. The chain crosses the membrane as a helical span at residues 40–60; it reads LLFLTGLSLIIGLRRTFSFFF. Topologically, residues 61–68 are cytoplasmic; it reads QRHKFKGT. The chain crosses the membrane as a helical span at residues 69–89; that stretch reads SFFLGGVVIVLLRWPLLGMCL. At 90–100 the chain is on the lumenal side; the sequence is ETYGFFSLFRG. Residues 101 to 121 traverse the membrane as a helical segment; that stretch reads FFPVAFGFLGSASNIPFLSAL. The Cytoplasmic portion of the chain corresponds to 122 to 132; sequence FQRLQGTSSMV.

This sequence belongs to the GOT1 family.

It localises to the golgi apparatus membrane. In terms of biological role, may be involved in fusion of ER-derived transport vesicles with the Golgi complex. In Bos taurus (Bovine), this protein is Vesicle transport protein GOT1A.